The sequence spans 337 residues: MSIARRTTLSKFLIEQQRETNNLPADLRLLIEVVARACKAISYNVSKGALGDALGTAGSENVQGEVQKKLDILSNEILLDANEWGGNLAAMASEEMETFFPIPANYPRGEYLLVFDPLDGSSNIDVNVSIGTIFSVLRCPDGKQATEESFLQPGTEQVAAGYAVYGPQTVFVLTTGNGVNCFTLDREVGSWVLTQSNMQIPADTREYAINASNARHWYDPVKRYVDELNAGKDGPRGDNFNMRWIASMVADVHRILNRGGIFMYPADKRTPDRPGKLRLMYEANPMSFIVEQAGGAATTGTQRIMEVQPTGLHQRVPVFLGSKNEVERVTGYHDEAK.

Positions 94, 116, 118, and 119 each coordinate Mg(2+). Substrate is bound by residues 119–122 (DGSS), N210, and K276. E282 serves as a coordination point for Mg(2+).

It belongs to the FBPase class 1 family. As to quaternary structure, homotetramer. Mg(2+) is required as a cofactor.

Its subcellular location is the cytoplasm. The enzyme catalyses beta-D-fructose 1,6-bisphosphate + H2O = beta-D-fructose 6-phosphate + phosphate. Its pathway is carbohydrate biosynthesis; gluconeogenesis. The sequence is that of Fructose-1,6-bisphosphatase class 1 from Burkholderia orbicola (strain MC0-3).